We begin with the raw amino-acid sequence, 503 residues long: Probable cytosol aminopeptidase (503 aa).

2 residues coordinate Mn(2+): lysine 270 and aspartate 275. Residue lysine 282 is part of the active site. The Mn(2+) site is built by aspartate 293, aspartate 352, and glutamate 354. Residue arginine 356 is part of the active site.

Belongs to the peptidase M17 family. Requires Mn(2+) as cofactor.

Its subcellular location is the cytoplasm. The catalysed reaction is Release of an N-terminal amino acid, Xaa-|-Yaa-, in which Xaa is preferably Leu, but may be other amino acids including Pro although not Arg or Lys, and Yaa may be Pro. Amino acid amides and methyl esters are also readily hydrolyzed, but rates on arylamides are exceedingly low.. The enzyme catalyses Release of an N-terminal amino acid, preferentially leucine, but not glutamic or aspartic acids.. Functionally, presumably involved in the processing and regular turnover of intracellular proteins. Catalyzes the removal of unsubstituted N-terminal amino acids from various peptides. The protein is Probable cytosol aminopeptidase of Escherichia fergusonii (strain ATCC 35469 / DSM 13698 / CCUG 18766 / IAM 14443 / JCM 21226 / LMG 7866 / NBRC 102419 / NCTC 12128 / CDC 0568-73).